The sequence spans 313 residues: Olfactory receptor 10P1 (313 aa).

Residues methionine 1–glycine 25 lie on the Extracellular side of the membrane. The N-linked (GlcNAc...) asparagine glycan is linked to asparagine 5. A helical membrane pass occupies residues proline 26–isoleucine 46. The Cytoplasmic segment spans residues leucine 47–alanine 54. A helical transmembrane segment spans residues leucine 55–threonine 75. The Extracellular portion of the chain corresponds to aspartate 76–alanine 100. A helical membrane pass occupies residues glutamine 101–tyrosine 121. Residues aspartate 122–arginine 140 lie on the Cytoplasmic side of the membrane. A helical transmembrane segment spans residues alanine 141–alanine 161. Topologically, residues serine 162–isoleucine 198 are extracellular. Residues serine 199–serine 218 form a helical membrane-spanning segment. The Cytoplasmic portion of the chain corresponds to tyrosine 219–valine 238. Residues phenylalanine 239–threonine 259 form a helical membrane-spanning segment. Topologically, residues tyrosine 260–aspartate 272 are extracellular. Residues arginine 273–leucine 293 form a helical membrane-spanning segment. Residues arginine 294–proline 313 are Cytoplasmic-facing.

It belongs to the G-protein coupled receptor 1 family.

Its subcellular location is the cell membrane. Functionally, odorant receptor. This Homo sapiens (Human) protein is Olfactory receptor 10P1 (OR10P1).